An 891-amino-acid chain; its full sequence is uncharacterized protein (891 aa).

The signal sequence occupies residues 1 to 20 (MKILKSLVLLVLFMAMPAKA). The next 6 membrane-spanning stretches (helical) occupy residues 525-545 (VTIF…VEVI), 568-588 (TYFF…VVGA), 614-634 (LLFI…IITI), 652-672 (VIAF…IILM), 685-705 (ISTL…FLLI), and 776-796 (FLVL…SYSL).

It belongs to the TrbL/VirB6 family.

Its subcellular location is the cell membrane. This is an uncharacterized protein from Rickettsia conorii (strain ATCC VR-613 / Malish 7).